The chain runs to 151 residues: MRIRIVVGGKLDNFIKMGVDHYKKFLRRFCKTEIIELKRTHGGSVEEIVKRETEELKKRVLPGSLMVVMDRRGENLSSEEFAGFLKEVEMKGKDITFLIGGPYGLSEEILSEAHRVFSLSRMTFTHGMSVLIVLEQVFRAFKIIRGENYHY.

Residues Gly-100 and 119–124 (LSRMTF) each bind S-adenosyl-L-methionine.

The protein belongs to the RNA methyltransferase RlmH family. Homodimer.

Its subcellular location is the cytoplasm. It catalyses the reaction pseudouridine(1915) in 23S rRNA + S-adenosyl-L-methionine = N(3)-methylpseudouridine(1915) in 23S rRNA + S-adenosyl-L-homocysteine + H(+). Its function is as follows. Specifically methylates the pseudouridine at position 1915 (m3Psi1915) in 23S rRNA. The polypeptide is Ribosomal RNA large subunit methyltransferase H (Thermotoga neapolitana (strain ATCC 49049 / DSM 4359 / NBRC 107923 / NS-E)).